Reading from the N-terminus, the 469-residue chain is 2-amino-4-ketopentanoate thiolase beta subunit (469 aa).

Lys102 carries the post-translational modification N6-(pyridoxal phosphate)lysine. Pyridoxal 5'-phosphate contacts are provided by residues Asn128 and 238–242; that span reads AGGGN.

The protein belongs to the threonine synthase family. In terms of assembly, heterodimer with OrtA. Requires pyridoxal 5'-phosphate as cofactor.

It carries out the reaction D-alanine + acetyl-CoA = (2R)-2-amino-4-oxopentanoate + CoA. Completely inhibited by p-chloromercuribenzoate (p-ClHgBzO) and acetyl-CoA, and partially inhibited by N-ethylmaleimide. Its function is as follows. Involved in the ornithine fermentation pathway. Catalyzes the thiolytic cleavage of 2-amino-4-ketopentanoate (AKP) with coenzyme A (CoA) to form acetyl-CoA and alanine. It is strictly specific for AKP. The protein is 2-amino-4-ketopentanoate thiolase beta subunit of Acetoanaerobium sticklandii (strain ATCC 12662 / DSM 519 / JCM 1433 / CCUG 9281 / NCIMB 10654 / HF) (Clostridium sticklandii).